Consider the following 8886-residue polypeptide: Obscurin (8886 aa).

Ig-like domains lie at 9-99 (PRFL…LRVD), 109-201 (PHFL…LVVD), 234-320 (PPSP…QTYS), and 329-415 (PTVP…AELS). The cysteines at positions 30 and 81 are disulfide-linked. Residues 135-165 (SPQPAVSWSKDGRRLGPPDAPHVRVEEHGES) are disordered. The segment covering 144 to 164 (KDGRRLGPPDAPHVRVEEHGE) has biased composition (basic and acidic residues). 2 disulfides stabilise this stretch: Cys257–Cys309 and Cys352–Cys402. Ser393 bears the Phosphoserine mark. The Fibronectin type-III 1 domain occupies 513–610 (PPADPVVKAK…FPGTMHLVPM (98 aa)). Ig-like domains follow at residues 702-793 (PSSK…QDIT), 859-951 (PKLV…VAEP), 951-1043 (PKLV…VAEP), 1043-1135 (PKMV…VTEP), 1135-1227 (PKLV…VAEP), 1227-1319 (PKLV…VTEP), 1319-1407 (PKLV…FRLD), 1411-1503 (PKLV…VAEP), 1503-1595 (PKLV…VAEP), 1595-1687 (PKLA…VAEP), 1687-1779 (PKLA…VAEP), 1779-1871 (PKLA…VAEP), 1871-1963 (PKLM…VAEP), 1963-2051 (PKLV…FRLD), 2055-2147 (TRLM…VAEA), 2152-2241 (PERP…EEVA), 2242-2325 (AKFS…ARLT), 2329-2415 (PRVV…AALR), 2420-2504 (PVLF…AKLN), 2598-2681 (PVSF…ASLR), 2721-2812 (PVTL…QSIT), 2900-2984 (PVVL…AEVT), 3078-3162 (PVVF…SKVS), 3258-3342 (PVDI…AKLC), 3348-3431 (NRFT…ARLL), 3527-3610 (PSIF…SSIV), 3616-3700 (PVRF…ATLT), 3785-3876 (ATLT…ATLT), 3881-3964 (PAKF…ATLT), 4042-4125 (PTKF…ATLS), 4130-4213 (PSRF…ATLS), 4219-4301 (PRFI…ATLN), 4307-4389 (PRFI…AVLT), 4395-4477 (PKFT…ATLS), 4483-4565 (PRFI…ATLS), 4571-4653 (PRFI…ATLS), 4659-4741 (PRFI…ATLS), 4746-4829 (PAKF…ATLS), 4833-4916 (PQVV…TSAT), 4923-5007 (PVRF…ARLS), 5013-5105 (PKFK…PEVT), 5378-5464 (LEVL…ARLS), and 5557-5659 (PQMV…TFNV). Disulfide bonds link Cys885–Cys935, Cys977–Cys1027, Cys1069–Cys1119, Cys1161–Cys1211, Cys1253–Cys1303, Cys1345–Cys1395, Cys1437–Cys1487, Cys1529–Cys1579, Cys1621–Cys1671, Cys1713–Cys1763, Cys1805–Cys1855, Cys1897–Cys1947, Cys1989–Cys2039, and Cys2081–Cys2131. A disulfide bridge connects residues Cys2263 and Cys2313. Cystine bridges form between Cys2620–Cys2669, Cys2743–Cys2793, Cys2922–Cys2972, Cys3100–Cys3150, Cys3280–Cys3330, Cys3369–Cys3419, Cys3549–Cys3599, and Cys3638–Cys3688. Ser3321 is subject to Phosphoserine. Residue Ser3802 is modified to Phosphoserine. 14 cysteine pairs are disulfide-bonded: Cys3815-Cys3864, Cys3903-Cys3952, Cys4064-Cys4113, Cys4152-Cys4201, Cys4240-Cys4289, Cys4328-Cys4377, Cys4416-Cys4465, Cys4504-Cys4553, Cys4592-Cys4641, Cys4680-Cys4729, Cys4768-Cys4817, Cys4856-Cys4906, Cys4945-Cys4995, and Cys5034-Cys5086. Ser4960 carries the phosphoserine modification. Residues 5471-5569 (PPEDAEVVGR…VKIAPAPAPA (99 aa)) enclose the Fibronectin type-III 2 domain. Cys5590 and Cys5643 are oxidised to a cystine. At Ser5699 the chain carries Phosphoserine. The segment at 5700–5736 (REPTLDSISELPEEDSRVQHLRQEAEETAPDLSEGYS) is disordered. Thr5703 is subject to Phosphothreonine. The residue at position 5706 (Ser5706) is a Phosphoserine. A compositionally biased stretch (basic and acidic residues) spans 5713–5724 (EDSRVQHLRQEA). Thr5737 bears the Phosphothreonine mark. Ser5754 is subject to Phosphoserine. An IQ domain is found at 5821-5850 (LDKAAVKIQAAFKGYKVRKEMKQQEGPVFS). One can recognise an Ig-like 48 domain in the interval 5847-5930 (PVFSRTFGDT…QVSTKSGRVS (84 aa)). Cys5868 and Cys5920 form a disulfide bridge. The interval 5977 to 5996 (EEELFLSADEGPGEPEEPAD) is disordered. Ig-like domains lie at 6077–6166 (PVFL…AELR), 6209–6298 (PQVL…ARLL), and 6320–6416 (PRIL…LHIS). Cys6098 and Cys6150 are joined by a disulfide. The interval 6504 to 6546 (KLQVPGGDSDEETKTPSASPRHGRSRPSSSVQESSSESEDGDS) is disordered. At Ser6512 the chain carries Phosphoserine. Phosphothreonine is present on Thr6518. Residues 6519–6538 (PSASPRHGRSRPSSSVQESS) show a composition bias toward low complexity. 2 positions are modified to phosphoserine: Ser6520 and Ser6522. One can recognise an SH3 domain in the interval 6549–6616 (EIFDIYVVTA…SPAYLDKRLK (68 aa)). A DH domain is found at 6642 to 6826 (RLSSVIQELL…SALPQRAENK (185 aa)). The PH domain occupies 6844 to 6953 (EPIRQGHFIV…WVKEICGIQQ (110 aa)). An a 1,2-diacyl-sn-glycero-3-phospho-(1D-myo-inositol-4,5-bisphosphate)-binding site is contributed by Arg6924. An a 1,2-diacyl-sn-glycero-3-phospho-(1D-myo-inositol-3,4-bisphosphate)-binding site is contributed by Arg6929. Ig-like domains follow at residues 6963–7046 (PEFE…GNAS) and 7057–7147 (PRFV…GELY). Intrachain disulfides connect Cys6984–Cys7036 and Cys7078–Cys7131. The tract at residues 7200 to 7257 (ALGPSPGDLPNTRQSEPPAFEEAASQIPGAASGTPEVSQPGTHKGLEQETTSSGSQGW) is disordered. The span at 7247 to 7257 (QETTSSGSQGW) shows a compositional bias: polar residues. An Ig-like 54 domain is found at 7306-7394 (PSMQVTIEDV…GQVLCKAELL (89 aa)). The Protein kinase 1 domain maps to 7416–7669 (YDVQEEIGRG…TSQCLAHPWF (254 aa)). ATP is bound by residues 7422 to 7430 (IGRGVFGFV) and Lys7445. The Proton acceptor role is filled by Asp7535. Disordered stretches follow at residues 7717-7810 (GPPD…SPGC), 7879-8106 (EQAS…TTRK), and 8150-8180 (SSEE…VPLR). Ser7779 carries the post-translational modification Phosphoserine. Over residues 7793–7804 (AAVPASPQSAGP) the composition is skewed to low complexity. Residues 7941 to 7952 (TTAKDRGHKEGF) show a composition bias toward basic and acidic residues. A compositionally biased stretch (polar residues) spans 7986–7996 (SCHSELGSGSQ). 2 stretches are compositionally biased toward low complexity: residues 8000–8014 (GPPS…PPQS) and 8053–8073 (GSLS…ASQV). Ser8161 is modified (phosphoserine). In terms of domain architecture, Ig-like 55 spans 8380-8464 (KGRDQELSDE…VSNPLGTAVT (85 aa)). An intrachain disulfide couples Cys8401 to Cys8453. The Fibronectin type-III 3 domain maps to 8474-8566 (PSSSPRPEVG…PSEQVLLGGP (93 aa)). One can recognise a Protein kinase 2 domain in the interval 8590–8842 (FAFQMQIRRG…ASTCLQCGWL (253 aa)). Residues 8596–8604 (IRRGRFSVV) and Lys8619 contribute to the ATP site. Asp8709 functions as the Proton acceptor in the catalytic mechanism.

Belongs to the protein kinase superfamily. CAMK Ser/Thr protein kinase family. As to quaternary structure, interacts (via protein kinase domain 1) with CDH2 and (via protein kinase domain 1) with ATP1B1. Isoform 2 is found in a complex with DSG2, DESM, GJA1, CDH2 and VCL. Isoform 3 is found in a complex with DSG2, DESM, GJA1, CDH2, ANK3 and VCL. Mg(2+) serves as cofactor. Autophosphorylated by protein kinase domain 1 and 2. In terms of processing, two small isoforms, one probably containing protein kinase domain 2 and a partial protein kinase domain 1 and one containing only protein kinase domain 2, are glycosylated. In terms of tissue distribution, expressed in skeletal muscles including flexor digitorum brevis (FDB), soleus and tibialis anterior muscles, and to a lesser extent in heart muscles (at protein level). Isoform 2 and isoform 3 are expressed in the myocardium (at protein level).

The protein resides in the cytoplasm. The protein localises to the myofibril. Its subcellular location is the sarcomere. It is found in the m line. It localises to the z line. The protein resides in the cell membrane. The protein localises to the sarcolemma. Its subcellular location is the nucleus. It is found in the secreted. It carries out the reaction L-seryl-[protein] + ATP = O-phospho-L-seryl-[protein] + ADP + H(+). The catalysed reaction is L-threonyl-[protein] + ATP = O-phospho-L-threonyl-[protein] + ADP + H(+). In terms of biological role, structural component of striated muscles which plays a role in myofibrillogenesis. Probably involved in the assembly of myosin into sarcomeric A bands in striated muscle. Has serine/threonine protein kinase activity and phosphorylates N-cadherin CDH2 and sodium/potassium-transporting ATPase subunit ATP1B1. Binds (via the PH domain) strongly to phosphatidylinositol 3,4-bisphosphate (PtdIns(3,4)P2) and phosphatidylinositol 4,5-bisphosphate (PtdIns(4,5)P2), and to a lesser extent to phosphatidylinositol 3-phosphate (PtdIns(3)P), phosphatidylinositol 4-phosphate (PtdIns(4)P), phosphatidylinositol 5-phosphate (PtdIns(5)P) and phosphatidylinositol 3,4,5-trisphosphate (PtdIns(3,4,5)P3). Functionally, isoform 2 and isoform 3: bind phosphatidylinositol bisphosphates (PIP2s) via their PH domains and negatively regulate the PI3K/AKT/mTOR signaling pathway, thus contributing to the regulation of cardiomyocyte size and adhesion. This Mus musculus (Mouse) protein is Obscurin.